We begin with the raw amino-acid sequence, 161 residues long: Putative 4-hydroxy-4-methyl-2-oxoglutarate aldolase (161 aa).

Substrate-binding positions include 75–78 (GDML) and Arg97. Asp98 contributes to the a divalent metal cation binding site.

It belongs to the class II aldolase/RraA-like family. As to quaternary structure, homotrimer. The cofactor is a divalent metal cation.

The enzyme catalyses 4-hydroxy-4-methyl-2-oxoglutarate = 2 pyruvate. It catalyses the reaction oxaloacetate + H(+) = pyruvate + CO2. In terms of biological role, catalyzes the aldol cleavage of 4-hydroxy-4-methyl-2-oxoglutarate (HMG) into 2 molecules of pyruvate. Also contains a secondary oxaloacetate (OAA) decarboxylase activity due to the common pyruvate enolate transition state formed following C-C bond cleavage in the retro-aldol and decarboxylation reactions. The polypeptide is Putative 4-hydroxy-4-methyl-2-oxoglutarate aldolase (Marinomonas sp. (strain MWYL1)).